A 135-amino-acid polypeptide reads, in one-letter code: MATRAQAREAVVSLLYAYDMGNTEIRKFAIELLEEKRIKNRQQEFALELFDGTIAHLGEIDEEIKKHLKEWDFSRIGDMERAILRLGTFEIVYSGVDRAVIINEAVELSKTFGNDNSPRFVNGVLDALRPDLKKG.

This sequence belongs to the NusB family.

Involved in transcription antitermination. Required for transcription of ribosomal RNA (rRNA) genes. Binds specifically to the boxA antiterminator sequence of the ribosomal RNA (rrn) operons. This chain is Transcription antitermination protein NusB, found in Wolinella succinogenes (strain ATCC 29543 / DSM 1740 / CCUG 13145 / JCM 31913 / LMG 7466 / NCTC 11488 / FDC 602W) (Vibrio succinogenes).